Here is a 568-residue protein sequence, read N- to C-terminus: MAGUK p55 subfamily member 3 (568 aa).

2 L27 domains span residues 6 to 60 (EDSG…ERQS) and 61 to 118 (PTPV…FDPV). Residues 137–218 (IVRLVKNKEP…SITLKIIPAT (82 aa)) form the PDZ domain. The region spanning 226–296 (DSKVFMRALF…PSKQFQERRL (71 aa)) is the SH3 domain. A Phosphoserine modification is found at Ser-307. One can recognise a Guanylate kinase-like domain in the interval 385-568 (PRLVVLIGSL…QEPAASSELS (184 aa)).

The protein belongs to the MAGUK family. In terms of assembly, interacts with HTR2C; this interaction stabilizes the receptor at the plasma membrane and prevents the desensitization of the HTR2C receptor-mediated calcium response. Interacts with HTR2A. Interacts with HTR4. Interacts (via PDZ domain) with CADM1 (via C-terminus)Interacts (via PDZ domain) with CADM1; this interaction connects CADM1 with DLG1. Interacts (via Guanylate kinase-like domain) with PALS1. Interacts with DLG1 (via N-terminus); this interaction connects CADM1 with DLG1 and links CADM1 with the regulatory subunit of phosphoinositide-3-kinase (PI3K) by forming a multiprotein complex and participates in cell spreading. Expressed in brain, skeletal muscle, testis, kidney, and lung.

The protein localises to the apical cell membrane. It localises to the cell membrane. The protein resides in the cell junction. Its subcellular location is the adherens junction. Participates in cell spreading through the phosphoinositide-3-kinase (PI3K) pathway by connecting CADM1 to DLG1 and the regulatory subunit of phosphoinositide-3-kinase (PI3K). Stabilizes HTR2C at the plasma membrane and prevents its desensitization. May participates in the maintenance of adherens junctions. The polypeptide is MAGUK p55 subfamily member 3 (Mus musculus (Mouse)).